A 444-amino-acid chain; its full sequence is Probable glycine dehydrogenase (decarboxylating) subunit 1 (444 aa).

Belongs to the GcvP family. N-terminal subunit subfamily. As to quaternary structure, the glycine cleavage system is composed of four proteins: P, T, L and H. In this organism, the P 'protein' is a heterodimer of two subunits.

The enzyme catalyses N(6)-[(R)-lipoyl]-L-lysyl-[glycine-cleavage complex H protein] + glycine + H(+) = N(6)-[(R)-S(8)-aminomethyldihydrolipoyl]-L-lysyl-[glycine-cleavage complex H protein] + CO2. The glycine cleavage system catalyzes the degradation of glycine. The P protein binds the alpha-amino group of glycine through its pyridoxal phosphate cofactor; CO(2) is released and the remaining methylamine moiety is then transferred to the lipoamide cofactor of the H protein. The sequence is that of Probable glycine dehydrogenase (decarboxylating) subunit 1 from Prosthecochloris aestuarii (strain DSM 271 / SK 413).